A 510-amino-acid chain; its full sequence is Cytochrome P450 94B1 (510 aa).

The chain crosses the membrane as a helical span at residues 3–23 (MLNAIILILFPIIGFVLIFSF). Cysteine 450 is a heme binding site.

It belongs to the cytochrome P450 family. It depends on heme as a cofactor.

It is found in the membrane. The catalysed reaction is a jasmonyl-L-amino acid + reduced [NADPH--hemoprotein reductase] + O2 = a 12-hydroxyjasmonyl-L-alpha-amino acid + oxidized [NADPH--hemoprotein reductase] + H2O + H(+). Functionally, hydroxylase involved in the oxidation of the plant hormone jasmonoyl-L-isoleucine (JA-Ile), a bioactive phytohormone of the jasmonate-mediated signaling pathway. Converts JA-Ile to 12-hydroxy-JA-Ile. This Arabidopsis thaliana (Mouse-ear cress) protein is Cytochrome P450 94B1.